A 367-amino-acid chain; its full sequence is Protein-glutamate methylesterase/protein-glutamine glutaminase 2 (367 aa).

A Response regulatory domain is found at R15 to E132. A 4-aspartylphosphate modification is found at D66. Positions K172–R367 constitute a CheB-type methylesterase domain. Active-site residues include S184, H211, and D311.

Belongs to the CheB family. Post-translationally, phosphorylated by CheA. Phosphorylation of the N-terminal regulatory domain activates the methylesterase activity.

It is found in the cytoplasm. It catalyses the reaction [protein]-L-glutamate 5-O-methyl ester + H2O = L-glutamyl-[protein] + methanol + H(+). The enzyme catalyses L-glutaminyl-[protein] + H2O = L-glutamyl-[protein] + NH4(+). In terms of biological role, involved in chemotaxis. Part of a chemotaxis signal transduction system that modulates chemotaxis in response to various stimuli. Catalyzes the demethylation of specific methylglutamate residues introduced into the chemoreceptors (methyl-accepting chemotaxis proteins or MCP) by CheR. Also mediates the irreversible deamidation of specific glutamine residues to glutamic acid. The chain is Protein-glutamate methylesterase/protein-glutamine glutaminase 2 from Methanosarcina mazei (strain ATCC BAA-159 / DSM 3647 / Goe1 / Go1 / JCM 11833 / OCM 88) (Methanosarcina frisia).